The chain runs to 2097 residues: SCAR-like protein 1 (2097 aa).

Disordered stretches follow at residues Ile205–Thr227, Ala544–Ser565, Ser1443–Ser1467, Ser1588–Lys1616, Gln1730–Val1802, Ala1820–Ser1842, and Tyr1893–Tyr1944. Low complexity predominate over residues Lys549–Ser562. Residues Ser1443 to Asn1454 are compositionally biased toward polar residues. Over residues Ser1766–Ala1794 the composition is skewed to polar residues. The segment covering Tyr1908 to Gln1922 has biased composition (basic and acidic residues). Positions Glu2028–Val2046 constitute a WH2 domain.

It belongs to the SCAR/WAVE family.

The protein resides in the cytoplasm. Its subcellular location is the cytoskeleton. Involved in regulation of actin and microtubule organization. Part of a WAVE complex that activates the Arp2/3 complex. The sequence is that of SCAR-like protein 1 from Oryza sativa subsp. japonica (Rice).